A 258-amino-acid chain; its full sequence is Phosphate import ATP-binding protein PstB 2 (258 aa).

The 242-residue stretch at 12 to 253 (IQVRDLNFYY…PQQKQTEDYI (242 aa)) folds into the ABC transporter domain. An ATP-binding site is contributed by 44-51 (GPSGCGKS).

Belongs to the ABC transporter superfamily. Phosphate importer (TC 3.A.1.7) family. As to quaternary structure, the complex is composed of two ATP-binding proteins (PstB), two transmembrane proteins (PstC and PstA) and a solute-binding protein (PstS).

It is found in the cell inner membrane. The catalysed reaction is phosphate(out) + ATP + H2O = ADP + 2 phosphate(in) + H(+). In terms of biological role, part of the ABC transporter complex PstSACB involved in phosphate import. Responsible for energy coupling to the transport system. This Yersinia pestis bv. Antiqua (strain Nepal516) protein is Phosphate import ATP-binding protein PstB 2.